The sequence spans 727 residues: YTH domain-containing protein 1 (727 aa).

Residues 1–12 are compositionally biased toward basic and acidic residues; it reads MAADSREEKDGE. Positions 1–338 are disordered; that stretch reads MAADSREEKD…KHEKLSSSVR (338 aa). Position 35 is a phosphoserine (Ser35). Basic and acidic residues predominate over residues 50–59; it reads DRMESTDTKR. The span at 63–90 shows a compositional bias: polar residues; that stretch reads SVHSRQLVSKPLSSSVSNNKRIVSTKGK. Residues 91-115 show a composition bias toward basic and acidic residues; the sequence is SATEYKNEEYQRSERNKRLDADRKI. A Glycyl lysine isopeptide (Lys-Gly) (interchain with G-Cter in SUMO2) cross-link involves residue Lys96. Residues Ser118 and Ser120 each carry the phosphoserine modification. A compositionally biased stretch (basic and acidic residues) spans 124–144; sequence EPYKNQPEKTCVRKRDPERRA. At Ser146 the chain carries Phosphoserine. Residue Thr148 is modified to Phosphothreonine. Composition is skewed to basic and acidic residues over residues 151–163 and 170–185; these read GSERIGLEVDRRA and SKEEVNSEEYGSDHET. Over residues 199-254 the composition is skewed to acidic residues; that stretch reads ENEEEGVEEDVEEDEEVEEDAEEDEEVDEDGEEEEEEEEEEEEEEEEEEEEYEQDE. A compositionally biased stretch (basic and acidic residues) spans 255 to 270; it reads RDQKEEGNDYDTRSEA. The span at 280-289 shows a compositional bias: polar residues; the sequence is FTDGSVRSGS. Ser308, Ser315, Ser317, Ser318, and Ser320 each carry phosphoserine. The span at 315-325 shows a compositional bias: low complexity; that stretch reads SGSSASESYAG. A YTH domain is found at 355-492; it reads ARFFLIKSNN…ECGTQLCLLF (138 aa). RNA contacts are provided by residues 361 to 363 and 377 to 378; these read KSN and WS. Residue Ser424 is modified to Phosphoserine. Trp428 contributes to the RNA binding site. A Phosphoserine modification is found at Ser435. Asp476 provides a ligand contact to RNA. Over residues 508 to 523 the composition is skewed to basic residues; it reads RHKRRMHSQPRSRGRP. Disordered stretches follow at residues 508–564, 607–643, and 669–727; these read RHKR…PGYL, GMPPYPGMEQPPHHPYYQHHAPPPQAHPPYSGHHPVP, and AVVS…RYRR. Basic and acidic residues predominate over residues 524-564; the sequence is SRREPVRDVGRRRPEDYDIHNSRKKPRIDYPPEFHQRPGYL. Ser545 carries the post-translational modification Phosphoserine. Basic and acidic residues predominate over residues 679-727; that stretch reads RERDRERERDRPRDNRRDRERDRGRDRERERERLCDRDRDRGERGRYRR.

In terms of assembly, interacts with SRSF1. Interacts with SRSF2. Interacts with SRSF3. Interacts with SRSF7. Interacts with SRSF10. Interacts with CPSF6. Interacts with KHDRBS1/SAM68. Interacts with TRA2B. Interacts with KHDRBS3. Interacts with EMD. Interacts with RBMX. Interacts with ZCCHC8. In terms of processing, tyrosine phosphorylated.

It is found in the nucleus. The protein localises to the nucleus speckle. In terms of biological role, regulator of alternative splicing that specifically recognizes and binds N6-methyladenosine (m6A)-containing RNAs. M6A is a modification present at internal sites of mRNAs and some non-coding RNAs and plays a role in the efficiency of mRNA splicing, processing and stability. Acts as a key regulator of exon-inclusion or exon-skipping during alternative splicing via interaction with mRNA splicing factors SRSF3 and SRSF10. Specifically binds m6A-containing mRNAs and promotes recruitment of SRSF3 to its mRNA-binding elements adjacent to m6A sites, leading to exon-inclusion during alternative splicing. In contrast, interaction with SRSF3 prevents interaction with SRSF10, a splicing factor that promotes exon skipping: this prevents SRSF10 from binding to its mRNA-binding sites close to m6A-containing regions, leading to inhibit exon skipping during alternative splicing. May also regulate alternative splice site selection. Also involved in nuclear export of m6A-containing mRNAs via interaction with SRSF3: interaction with SRSF3 facilitates m6A-containing mRNA-binding to both SRSF3 and NXF1, promoting mRNA nuclear export. Involved in S-adenosyl-L-methionine homeostasis by regulating expression of MAT2A transcripts, probably by binding m6A-containing MAT2A mRNAs. Also recognizes and binds m6A on other RNA molecules. Involved in random X inactivation mediated by Xist RNA: recognizes and binds m6A-containing Xist and promotes transcription repression activity of Xist. Also recognizes and binds m6A-containing single-stranded DNA. Involved in germline development: required for spermatogonial development in males and oocyte growth and maturation in females, probably via its role in alternative splicing. This chain is YTH domain-containing protein 1, found in Homo sapiens (Human).